The following is a 695-amino-acid chain: Elongation factor G (695 aa).

Positions 8–282 (KDTRNIGIMA…AIVDYMPAPI (275 aa)) constitute a tr-type G domain. GTP-binding positions include 17-24 (AHIDAGKT), 81-85 (DTPGH), and 135-138 (NKMD). The tract at residues 285–304 (PDIKGVDPQTDEPTTRKSSD) is disordered.

The protein belongs to the TRAFAC class translation factor GTPase superfamily. Classic translation factor GTPase family. EF-G/EF-2 subfamily.

The protein localises to the cytoplasm. Catalyzes the GTP-dependent ribosomal translocation step during translation elongation. During this step, the ribosome changes from the pre-translocational (PRE) to the post-translocational (POST) state as the newly formed A-site-bound peptidyl-tRNA and P-site-bound deacylated tRNA move to the P and E sites, respectively. Catalyzes the coordinated movement of the two tRNA molecules, the mRNA and conformational changes in the ribosome. This is Elongation factor G from Finegoldia magna (strain ATCC 29328 / DSM 20472 / WAL 2508) (Peptostreptococcus magnus).